A 308-amino-acid chain; its full sequence is rRNA 2'-O-methyltransferase fibrillarin 1 (308 aa).

Positions 1-68 are disordered; sequence MRPPVTGGRG…PRGGMKGGSK (68 aa). Residues 22–35 are compositionally biased toward gly residues; sequence GRGFGGGRSFGGGR. Basic residues predominate over residues 42–52; that stretch reads SGPRGRGRGAP. Residues 53–65 show a composition bias toward gly residues; that stretch reads RGRGGPPRGGMKG. S-adenosyl-L-methionine is bound by residues 156-157, 175-176, 200-201, and 220-223; these read TT, EF, DA, and DVAQ.

The protein belongs to the methyltransferase superfamily. Fibrillarin family. As to quaternary structure, component of box C/D small nucleolar ribonucleoprotein (snoRNP) particles. Interacts with SKP1A. As to expression, expressed in roots, leaves and flowers. Expressed in stems.

It is found in the nucleus. The protein resides in the nucleolus. It carries out the reaction a ribonucleotide in rRNA + S-adenosyl-L-methionine = a 2'-O-methylribonucleotide in rRNA + S-adenosyl-L-homocysteine + H(+). The catalysed reaction is L-glutaminyl-[histone H2A] + S-adenosyl-L-methionine = N(5)-methyl-L-glutaminyl-[histone H2A] + S-adenosyl-L-homocysteine + H(+). Functionally, S-adenosyl-L-methionine-dependent methyltransferase that has the ability to methylate both RNAs and proteins. Involved in pre-rRNA processing. Utilizes the methyl donor S-adenosyl-L-methionine to catalyze the site-specific 2'-hydroxyl methylation of ribose moieties in pre-ribosomal RNA. Site specificity is provided by a guide RNA that base pairs with the substrate. Methylation occurs at a characteristic distance from the sequence involved in base pairing with the guide RNA. Also acts as a protein methyltransferase by mediating methylation of 'Gln-105' of histone H2A (H2AQ105me), a modification that impairs binding of the FACT complex and is specifically present at 35S ribosomal DNA locus. Binds monophosphate phosphoinositides in vitro. This Arabidopsis thaliana (Mouse-ear cress) protein is rRNA 2'-O-methyltransferase fibrillarin 1.